Here is a 340-residue protein sequence, read N- to C-terminus: Protein-arginine kinase (340 aa).

Positions 21-242 constitute a Phosphagen kinase C-terminal domain; the sequence is VVLSSRIRLA…EQIIMQERVA (222 aa). ATP-binding positions include 24-28, histidine 79, arginine 113, 164-168, and 195-200; these read SSRIR, RASVM, and RGIYGE.

The protein belongs to the ATP:guanido phosphotransferase family.

It catalyses the reaction L-arginyl-[protein] + ATP = N(omega)-phospho-L-arginyl-[protein] + ADP + H(+). Functionally, catalyzes the specific phosphorylation of arginine residues in proteins. This is Protein-arginine kinase from Listeria innocua serovar 6a (strain ATCC BAA-680 / CLIP 11262).